The sequence spans 101 residues: uncharacterized protein (101 aa).

Residues Leu-68–Ile-90 form a helical membrane-spanning segment.

Its subcellular location is the membrane. This is an uncharacterized protein from Saccharomyces cerevisiae (strain ATCC 204508 / S288c) (Baker's yeast).